A 414-amino-acid chain; its full sequence is Probable serine/threonine-protein kinase PBL26 (414 aa).

A lipid anchor (S-palmitoyl cysteine) is attached at cysteine 3. The segment covering 17–41 has biased composition (basic and acidic residues); that stretch reads RDSDNSYRRNGEVTGRDNNKTHPEN. The interval 17–55 is disordered; the sequence is RDSDNSYRRNGEVTGRDNNKTHPENPKTVNEQNKNNDED. A Protein kinase domain is found at 79-356; sequence FRQECLIGEG…SDVVTALGFL (278 aa). ATP is bound by residues 85–93 and lysine 108; that span reads IGEGGFGRV. The residue at position 153 (tyrosine 153) is a Phosphotyrosine. Catalysis depends on aspartate 206, which acts as the Proton acceptor. Serine 240 is subject to Phosphoserine. Residue threonine 246 is modified to Phosphothreonine. Tyrosine 254 carries the post-translational modification Phosphotyrosine. Residues 364 to 394 form a disordered region; the sequence is ISVPHYDDPPQPSDETSVEDSVAAEERERAV.

This sequence belongs to the protein kinase superfamily. Ser/Thr protein kinase family. In terms of processing, palmitoylation at Cys-3 and Cys-6 are required for plasma membrane location.

It localises to the cell membrane. It carries out the reaction L-seryl-[protein] + ATP = O-phospho-L-seryl-[protein] + ADP + H(+). It catalyses the reaction L-threonyl-[protein] + ATP = O-phospho-L-threonyl-[protein] + ADP + H(+). Functionally, may be involved in plant defense signaling. This chain is Probable serine/threonine-protein kinase PBL26, found in Arabidopsis thaliana (Mouse-ear cress).